We begin with the raw amino-acid sequence, 753 residues long: Catalase-peroxidase (753 aa).

Residues 1–39 (MLPRVNKRSNCIAKKTSNRLISAVSLAIASLCISQSALA) form the signal peptide. Residues 118–241 (WHSTGTYRMS…LAAVQMGLIY (124 aa)) constitute a cross-link (tryptophyl-tyrosyl-methioninium (Trp-Tyr) (with M-267)). Histidine 119 serves as the catalytic Proton acceptor. The tryptophyl-tyrosyl-methioninium (Tyr-Met) (with W-118) cross-link spans 241-267 (YVNPEGPNGNHDPISAAADIRDVFARM). Heme b is bound at residue histidine 282.

The protein belongs to the peroxidase family. Peroxidase/catalase subfamily. As to quaternary structure, homodimer or homotetramer. Heme b serves as cofactor. Post-translationally, formation of the three residue Trp-Tyr-Met cross-link is important for the catalase, but not the peroxidase activity of the enzyme.

It catalyses the reaction H2O2 + AH2 = A + 2 H2O. The catalysed reaction is 2 H2O2 = O2 + 2 H2O. In terms of biological role, bifunctional enzyme with both catalase and broad-spectrum peroxidase activity. This chain is Catalase-peroxidase, found in Pseudoalteromonas atlantica (strain T6c / ATCC BAA-1087).